Consider the following 61-residue polypeptide: Large ribosomal subunit protein uL30 (61 aa).

The protein belongs to the universal ribosomal protein uL30 family. In terms of assembly, part of the 50S ribosomal subunit.

The protein is Large ribosomal subunit protein uL30 of Corynebacterium urealyticum (strain ATCC 43042 / DSM 7109).